The following is a 392-amino-acid chain: Probable glycerol-3-phosphate dehydrogenase 2 (392 aa).

NAD(+)-binding positions include 42–47 (GSGNWG), Phe130, Lys153, and Ala196. Lys153 serves as a coordination point for substrate. The active-site Proton acceptor is the Lys248. NAD(+) is bound by residues Arg312 and Gln341. Residue 312–313 (RN) coordinates substrate.

It belongs to the NAD-dependent glycerol-3-phosphate dehydrogenase family. In terms of assembly, homodimer.

It is found in the cytoplasm. It carries out the reaction sn-glycerol 3-phosphate + NAD(+) = dihydroxyacetone phosphate + NADH + H(+). The polypeptide is Probable glycerol-3-phosphate dehydrogenase 2 (gpdh-2) (Caenorhabditis elegans).